Reading from the N-terminus, the 278-residue chain is DNA adenine methylase (278 aa).

Residues Trp10, Lys14, Asp54, and Asp181 each coordinate S-adenosyl-L-methionine.

This sequence belongs to the N(4)/N(6)-methyltransferase family.

It catalyses the reaction a 2'-deoxyadenosine in DNA + S-adenosyl-L-methionine = an N(6)-methyl-2'-deoxyadenosine in DNA + S-adenosyl-L-homocysteine + H(+). Its function is as follows. An alpha subtype methylase, recognizes the double-stranded sequence 5'-GATC-3' and methylates A-2. May be involved in methyl-directed DNA mismatch repair, initiation of chromosome replication and gene expression. This chain is DNA adenine methylase (dam), found in Salmonella typhimurium.